Here is a 309-residue protein sequence, read N- to C-terminus: Probable MRF1 mitochondrial N(5)-glutamine methyltransferase mtq1 (309 aa).

S-adenosyl-L-methionine is bound by residues 124–128 (CTGSG), D148, and N200. 200–203 (NPPY) serves as a coordination point for substrate.

The protein belongs to the protein N5-glutamine methyltransferase family.

Its subcellular location is the mitochondrion. It catalyses the reaction L-glutaminyl-[peptide chain release factor] + S-adenosyl-L-methionine = N(5)-methyl-L-glutaminyl-[peptide chain release factor] + S-adenosyl-L-homocysteine + H(+). Methylates MRF1 on 'Gln-270' using S-adenosyl L-methionine as methyl donor. The sequence is that of Probable MRF1 mitochondrial N(5)-glutamine methyltransferase mtq1 (mtq1) from Schizosaccharomyces pombe (strain 972 / ATCC 24843) (Fission yeast).